A 311-amino-acid polypeptide reads, in one-letter code: Tyrosine recombinase XerD (311 aa).

The region spanning 1–83 (MEFIAQFLEM…TIKSYYAFLI (83 aa)) is the Core-binding (CB) domain. A Tyr recombinase domain is found at 104–299 (KLPIILSIDQ…HTNHLKKALL (196 aa)). Catalysis depends on residues Arg-145, Lys-176, His-251, Arg-254, and His-277. Residue Tyr-286 is the O-(3'-phospho-DNA)-tyrosine intermediate of the active site.

The protein belongs to the 'phage' integrase family. XerD subfamily. In terms of assembly, forms a cyclic heterotetrameric complex composed of two molecules of XerC and two molecules of XerD.

The protein localises to the cytoplasm. Its function is as follows. Site-specific tyrosine recombinase, which acts by catalyzing the cutting and rejoining of the recombining DNA molecules. The XerC-XerD complex is essential to convert dimers of the bacterial chromosome into monomers to permit their segregation at cell division. It also contributes to the segregational stability of plasmids. In Rickettsia prowazekii (strain Madrid E), this protein is Tyrosine recombinase XerD.